A 214-amino-acid polypeptide reads, in one-letter code: Cytochrome b (214 aa).

4 helical membrane-spanning segments follow: residues 31–51 (FGSM…FLAI), 75–96 (WIMQ…YTHI), 111–131 (WLSG…GYVL), and 176–196 (FFAL…IHIL). 2 residues coordinate heme b: His-81 and His-95. Heme b contacts are provided by His-180 and His-194. His-199 lines the a ubiquinone pocket.

This sequence belongs to the cytochrome b family. As to quaternary structure, the cytochrome bc1 complex contains 3 respiratory subunits (MT-CYB, CYC1 and UQCRFS1), 2 core proteins (UQCRC1 and UQCRC2) and probably 6 low-molecular weight proteins. The cofactor is heme b.

Its subcellular location is the mitochondrion inner membrane. Functionally, component of the ubiquinol-cytochrome c reductase complex (complex III or cytochrome b-c1 complex) that is part of the mitochondrial respiratory chain. The b-c1 complex mediates electron transfer from ubiquinol to cytochrome c. Contributes to the generation of a proton gradient across the mitochondrial membrane that is then used for ATP synthesis. The protein is Cytochrome b (MT-CYB) of Lachesis muta muta (Bushmaster).